Here is a 318-residue protein sequence, read N- to C-terminus: L-malyl-CoA/beta-methylmalyl-CoA lyase (318 aa).

Residues phenylalanine 19, arginine 24, lysine 30, and arginine 76 each contribute to the substrate site. Mg(2+) contacts are provided by glutamate 141 and aspartate 168. Substrate contacts are provided by residues 167–168 (AD) and 251–252 (IH).

Belongs to the HpcH/HpaI aldolase family. As to quaternary structure, homohexamer. Dimer of trimers. The cofactor is Mg(2+). Requires Mn(2+) as cofactor.

It carries out the reaction (S)-malyl-CoA = glyoxylate + acetyl-CoA. The catalysed reaction is (2R,3S)-beta-methylmalyl-CoA = propanoyl-CoA + glyoxylate. Functionally, involved in the ethylmalonyl-CoA pathway for acetate assimilation. Catalyzes the reversible condensation of glyoxylate and acetyl-CoA to L-malyl-CoA and the reversible condensation of glyoxylate and propionyl-CoA to yield beta-methylmalyl-CoA. The polypeptide is L-malyl-CoA/beta-methylmalyl-CoA lyase (Cereibacter sphaeroides (strain ATCC 17025 / ATH 2.4.3) (Rhodobacter sphaeroides)).